The following is a 754-amino-acid chain: 5-methyltetrahydropteroyltriglutamate--homocysteine methyltransferase (754 aa).

Residues 19–22 (RELK) and Lys-121 contribute to the 5-methyltetrahydropteroyltri-L-glutamate site. Residues 423–425 (IGS) and Glu-476 contribute to the L-homocysteine site. Residues 423-425 (IGS) and Glu-476 contribute to the L-methionine site. 5-methyltetrahydropteroyltri-L-glutamate contacts are provided by residues 507-508 (RC) and Trp-553. Asp-591 contacts L-homocysteine. Asp-591 serves as a coordination point for L-methionine. Residue Glu-597 participates in 5-methyltetrahydropteroyltri-L-glutamate binding. Residues His-633, Cys-635, and Glu-657 each contribute to the Zn(2+) site. The active-site Proton donor is the His-686. Cys-718 contributes to the Zn(2+) binding site.

Belongs to the vitamin-B12 independent methionine synthase family. Zn(2+) serves as cofactor.

It catalyses the reaction 5-methyltetrahydropteroyltri-L-glutamate + L-homocysteine = tetrahydropteroyltri-L-glutamate + L-methionine. The protein operates within amino-acid biosynthesis; L-methionine biosynthesis via de novo pathway; L-methionine from L-homocysteine (MetE route): step 1/1. Catalyzes the transfer of a methyl group from 5-methyltetrahydrofolate to homocysteine resulting in methionine formation. The chain is 5-methyltetrahydropteroyltriglutamate--homocysteine methyltransferase from Corynebacterium efficiens (strain DSM 44549 / YS-314 / AJ 12310 / JCM 11189 / NBRC 100395).